The chain runs to 1481 residues: Neuropathy target esterase sws (1481 aa).

Topologically, residues 1-34 (MDVLELLRASANGCYNTIFSDAWSQYVSQQITSS) are lumenal. The chain crosses the membrane as a helical span at residues 35 to 55 (LYLYIALGILTVLFVAWFIYF). The Cytoplasmic segment spans residues 56–1481 (KRLARLRLRD…KENKNVNTKN (1426 aa)). 175–302 (IFGHFEKPVF…IRVIQVIMIR (128 aa)) contacts a nucleoside 3',5'-cyclic phosphate. Residues 336–420 (HLNSQSQSSQ…NNVQLPEVHG (85 aa)) are disordered. Low complexity-rich tracts occupy residues 339-379 (SQSQ…LPLQ) and 401-412 (SGPNPNPNSGNN). The residue at position 448 (S448) is a Phosphoserine. A nucleoside 3',5'-cyclic phosphate is bound by residues 492–624 (ELGL…VVRR) and 613–740 (IVLD…LSHR). In terms of domain architecture, PNPLA spans 967–1133 (LVLGGGGARG…VNNLPGHLWR (167 aa)). Residues 971-976 (GGGARG) carry the GXGXXG motif. Residues 998–1002 (GVSIG) carry the GXSXG motif. The active-site Nucleophile is S1000. D1120 functions as the Proton acceptor in the catalytic mechanism. A DGA/G motif is present at residues 1120–1122 (DGG). The residue at position 1214 (S1214) is a Phosphoserine. The tract at residues 1366–1481 (LSLSEAEMDS…KENKNVNTKN (116 aa)) is disordered. Composition is skewed to basic and acidic residues over residues 1379-1390 (IDFRSDSKKDKA) and 1400-1410 (KDNEDKTDAVD). Low complexity predominate over residues 1445–1457 (TNTMTTQTTSPTT).

The protein belongs to the NTE family. Interacts with Pka-C3; interaction inhibits the catalytic function of Pka-C3 and the esterase activity of sws.

The protein localises to the endoplasmic reticulum membrane. The enzyme catalyses a 1-acyl-sn-glycero-3-phosphocholine + H2O = sn-glycerol 3-phosphocholine + a fatty acid + H(+). Functionally, phospholipase B that deacylates intracellular phosphatidylcholine (PtdCho), generating glycerophosphocholine (GroPtdCho). This deacylation occurs at both sn-2 and sn-1 positions of PtdCho. Its specific chemical modification by certain organophosphorus (OP) compounds leads to distal axonopathy. Plays a role in the signaling mechanism between neurons and glia that regulates glia wrapping during development of the adult brain. Essential for membrane lipid homeostasis and cell survival in both neurons and glia of the adult brain. The protein is Neuropathy target esterase sws of Drosophila willistoni (Fruit fly).